The sequence spans 576 residues: Rop guanine nucleotide exchange factor 13 (576 aa).

The PRONE domain maps to 119–485; the sequence is KSCYFAYVTE…QLTQNPELAM (367 aa). The segment covering 557-570 has biased composition (polar residues); sequence KTTYLESLGTTRSP. Residues 557 to 576 form a disordered region; sequence KTTYLESLGTTRSPTAGRYS.

In terms of assembly, interacts with PRK6. As to expression, specifically expressed in mature flowers.

In terms of biological role, guanine-nucleotide exchange factor (GEF) that acts as an activator of Rop (Rho of plants) GTPases by promoting the exchange of GDP for GTP. The polypeptide is Rop guanine nucleotide exchange factor 13 (Arabidopsis thaliana (Mouse-ear cress)).